The primary structure comprises 189 residues: Cyclin-dependent kinase inhibitor 5 (189 aa).

A compositionally biased stretch (polar residues) spans 73–93 (KQQKQQLIPSVNQCQTKNPRA). Residues 73–107 (KQQKQQLIPSVNQCQTKNPRASSGPAKKLEPDTTT) are disordered.

This sequence belongs to the CDI family. ICK/KRP subfamily. Interacts with CYCD4-1. Does not interact with CDKA-1. In terms of tissue distribution, expressed in flowers and at lower levels in roots and leaves.

It is found in the nucleus. The protein localises to the nucleoplasm. Its function is as follows. Inhibits CYCD2-1/CDKA-1 complex kinase activity without interaction with the complex. The sequence is that of Cyclin-dependent kinase inhibitor 5 (KRP5) from Arabidopsis thaliana (Mouse-ear cress).